The sequence spans 290 residues: S-methyl-5'-thioadenosine phosphorylase 2 (290 aa).

Phosphate-binding positions include S14, 57 to 58, and 90 to 91; these read RH and SA. M185 provides a ligand contact to substrate. S186 contacts phosphate. Position 209-211 (209-211) interacts with substrate; that stretch reads DYD.

This sequence belongs to the PNP/MTAP phosphorylase family. MTAP subfamily. Homotrimer.

Its subcellular location is the cytoplasm. It localises to the nucleus. It carries out the reaction S-methyl-5'-thioadenosine + phosphate = 5-(methylsulfanyl)-alpha-D-ribose 1-phosphate + adenine. It participates in amino-acid biosynthesis; L-methionine biosynthesis via salvage pathway; S-methyl-5-thio-alpha-D-ribose 1-phosphate from S-methyl-5'-thioadenosine (phosphorylase route): step 1/1. Functionally, catalyzes the reversible phosphorylation of S-methyl-5'-thioadenosine (MTA) to adenine and 5-methylthioribose-1-phosphate. Involved in the breakdown of MTA, a major by-product of polyamine biosynthesis. Responsible for the first step in the methionine salvage pathway after MTA has been generated from S-adenosylmethionine. Has broad substrate specificity with 6-aminopurine nucleosides as preferred substrates. This is S-methyl-5'-thioadenosine phosphorylase 2 from Puccinia graminis f. sp. tritici (strain CRL 75-36-700-3 / race SCCL) (Black stem rust fungus).